The following is a 264-amino-acid chain: tRNA (guanine-N(1)-)-methyltransferase (264 aa).

S-adenosyl-L-methionine-binding positions include G125 and 145 to 150; that span reads LGDFVL.

This sequence belongs to the RNA methyltransferase TrmD family. In terms of assembly, homodimer.

The protein localises to the cytoplasm. It carries out the reaction guanosine(37) in tRNA + S-adenosyl-L-methionine = N(1)-methylguanosine(37) in tRNA + S-adenosyl-L-homocysteine + H(+). Functionally, specifically methylates guanosine-37 in various tRNAs. This Burkholderia vietnamiensis (strain G4 / LMG 22486) (Burkholderia cepacia (strain R1808)) protein is tRNA (guanine-N(1)-)-methyltransferase.